The primary structure comprises 371 residues: UDP-N-acetylglucosamine--N-acetylmuramyl-(pentapeptide) pyrophosphoryl-undecaprenol N-acetylglucosamine transferase (371 aa).

Residues 15 to 17, N126, R172, S199, I256, 275 to 280, and Q301 contribute to the UDP-N-acetyl-alpha-D-glucosamine site; these read TGG and ALTVSE.

This sequence belongs to the glycosyltransferase 28 family. MurG subfamily.

It localises to the cell inner membrane. The enzyme catalyses di-trans,octa-cis-undecaprenyl diphospho-N-acetyl-alpha-D-muramoyl-L-alanyl-D-glutamyl-meso-2,6-diaminopimeloyl-D-alanyl-D-alanine + UDP-N-acetyl-alpha-D-glucosamine = di-trans,octa-cis-undecaprenyl diphospho-[N-acetyl-alpha-D-glucosaminyl-(1-&gt;4)]-N-acetyl-alpha-D-muramoyl-L-alanyl-D-glutamyl-meso-2,6-diaminopimeloyl-D-alanyl-D-alanine + UDP + H(+). It participates in cell wall biogenesis; peptidoglycan biosynthesis. In terms of biological role, cell wall formation. Catalyzes the transfer of a GlcNAc subunit on undecaprenyl-pyrophosphoryl-MurNAc-pentapeptide (lipid intermediate I) to form undecaprenyl-pyrophosphoryl-MurNAc-(pentapeptide)GlcNAc (lipid intermediate II). This Francisella tularensis subsp. mediasiatica (strain FSC147) protein is UDP-N-acetylglucosamine--N-acetylmuramyl-(pentapeptide) pyrophosphoryl-undecaprenol N-acetylglucosamine transferase.